A 232-amino-acid polypeptide reads, in one-letter code: MIDQKVIVALDYDNQADALAFVDRIDPASCRLKVGKEMFTLFGPDFVRELHKRGFSVFLDLKFHDIPNTCSKAVRAAAELGVWMVNVHASGGERMMTASREILEPYGKDRPLLIGVTVLTSMEQSDLAGIGLNVAPQDHVIRLATLTKNSGLDGVVCSAQESSLLKNELGKEFKLVTPGIRPLGSEQGDQRRIMTPLEAVQAGSDYLVIGRPITQAVDPAAVLQAINTSLTK.

Residues Asp-11, Lys-33, 60-69 (DLKFHDIPNT), Thr-120, Arg-181, Gln-190, Gly-210, and Arg-211 contribute to the substrate site. Lys-62 serves as the catalytic Proton donor.

It belongs to the OMP decarboxylase family. Type 1 subfamily. Homodimer.

It carries out the reaction orotidine 5'-phosphate + H(+) = UMP + CO2. Its pathway is pyrimidine metabolism; UMP biosynthesis via de novo pathway; UMP from orotate: step 2/2. In terms of biological role, catalyzes the decarboxylation of orotidine 5'-monophosphate (OMP) to uridine 5'-monophosphate (UMP). The sequence is that of Orotidine 5'-phosphate decarboxylase from Vibrio vulnificus (strain YJ016).